Here is a 1516-residue protein sequence, read N- to C-terminus: MEPGSDDFLPPPECPVFEPSWAEFRDPLGYIAKIRPIAEKSGICKIRPPADWQPPFAVEVDNFRFTPRIQRLNELEIVVEEGGYEAICKDRRWARVAQRLNYPPGKNIGSLLRSHYERIVYPYEMYQSGANLVQCNTRPFDNEEKDKEYKPHSIPLRQSVQPSKFNSYGRRAKRLQPDPEPTEEDIEKNPELKKLQIYGAGPKMMGLGLMAKDKTLRKKDKEGPECPPTVVVKEESGGDVKVESTSPKTFLESKEELSHSPEPCTKMTMRLRRNHSNAQFIESYVCRMCSRGDEDDKLLLCDGCDDNYHIFCLLPPLPEIPKGVWRCPKCVMAECKRPPEAFGFEQATREYTLQSFGEMADSFKADYSNMPVHMVPTELVEKEFWRLVNSIEEDVTVEYGADIHSKEFGSGFPVSDSKRHLTPEEEEYATSGWNLNVMPVLEQSVLCHINADISGMKVPWLYVGMVFSAFCWHIEDHWSYSINYLHWGEPKTWYGVPSLAAEHLEEVMKKLTPELFDSQPDLLHQLVTLMNPNTLMSHGVPVVRTNQCAGEFVITFPRAYHSGFNQGYNFAEAVNFCTADWLPAGRQCIEHYRRLRRYCVFSHEELICKMAACPEKLDLNLAAAVHKEMFIMVQEERRLRKALLEKGITEAEREAFELLPDDERQCIKCKTTCFLSALACYDCPDGLVCLSHINDLCKCSSSRQYLRYRYTLDELPAMLHKLKVRAESFDTWANKVRVALEVEDGRKRSLEELRALESEARERRFPNSELLQRLKNCLSEAEACVSRALGLVSGQEAGPHRVAGLQMTLAELRAFLDQMNNLPCAMHQIGDVKGILEQVEAYQAEAREALASLPSSPGLLQSLLERGRQLGVEVPEAQQLQRQVEQARWLDEVKRTLAPSARRGTLAVMRGLLVAGASVAPSPAVDKAQAELQELLTIAERWEEKAHLCLEARQKHPPATLEAIIHEAENIPVHLPNIQALKEALAKARAWIADVDEIQNGDHYPCLDDLEGLVAVGRDLPVGLEELRQLELQVLTAHSWREKASKTFLKKNSCYTLLEVLCPCADAGSDSTKRSRWMEKELGLYKSDTELLGLSAQDLRDPGSVIVAFKEGEQKEKEGILQLRRTNSAKPSPLASPNTSSSATSICVCGQVPAGVGALQCDLCQDWFHGRCVSVPRLLSSPRPSPTSSPLLAWWEWDTKFLCPLCMRSRRPRLETILALLVALQRLPVRLPEGEALQCLTERAISWQGRARQALAFEDVTALLGRLAELRQRLQAEPRPEEPPTYPSTPAFDPLREGSGKDMPKVQGLLENGDSVTSPEKVAPGEGSDLELLSSLLPQLTGPVLELPEATRAPLEELMLEGDLLEVTLDENHSIWQLLQAGKPPDLARIRTLLELEKAERHGSRARGRALERRRRRKVDRGGEGDDPAREELEPKRVRSSWPEAEEAHEEEELEEETGGEGPPQPLPATGSPSTQENQNGLEPALGASSGSSVPFSTLTPRLHMSCPQQPPQQQL.

The 42-residue stretch at 14–55 (CPVFEPSWAEFRDPLGYIAKIRPIAEKSGICKIRPPADWQPP) folds into the JmjN domain. The 105-residue stretch at 24–128 (FRDPLGYIAK…IVYPYEMYQS (105 aa)) folds into the ARID domain. The segment covering 142–151 (NEEKDKEYKP) has biased composition (basic and acidic residues). A disordered region spans residues 142 to 186 (NEEKDKEYKPHSIPLRQSVQPSKFNSYGRRAKRLQPDPEPTEEDI). Over residues 156-166 (LRQSVQPSKFN) the composition is skewed to polar residues. Glycyl lysine isopeptide (Lys-Gly) (interchain with G-Cter in SUMO2) cross-links involve residues Lys-164, Lys-188, Lys-203, and Lys-233. A disordered region spans residues 216-262 (LRKKDKEGPECPPTVVVKEESGGDVKVESTSPKTFLESKEELSHSPE). Over residues 232–242 (VKEESGGDVKV) the composition is skewed to basic and acidic residues. The residue at position 246 (Ser-246) is a Phosphoserine. A Glycyl lysine isopeptide (Lys-Gly) (interchain with G-Cter in SUMO2) cross-link involves residue Lys-254. Ser-260 and Ser-276 each carry phosphoserine. Residues 283–333 (SYVCRMCSRGDEDDKLLLCDGCDDNYHIFCLLPPLPEIPKGVWRCPKCVMA) form a PHD-type 1 zinc finger. Residue Tyr-399 participates in 2-oxoglutarate binding. The region spanning 427–593 (EYATSGWNLN…AGRQCIEHYR (167 aa)) is the JmjC domain. His-473 and Glu-475 together coordinate Fe cation. 2-oxoglutarate-binding residues include Ser-481, Asn-483, and Lys-491. Position 561 (His-561) interacts with Fe cation. The C5HC2 zinc finger occupies 666–718 (CIKCKTTCFLSALACYDCPDGLVCLSHINDLCKCSSSRQYLRYRYTLDELPAM). Residues Ser-852 and Ser-856 each carry the phosphoserine modification. Lys-1086 is covalently cross-linked (Glycyl lysine isopeptide (Lys-Gly) (interchain with G-Cter in SUMO2)). The PHD-type 2 zinc-finger motif lies at 1144 to 1209 (TSICVCGQVP…KFLCPLCMRS (66 aa)). Positions 1274–1305 (LQAEPRPEEPPTYPSTPAFDPLREGSGKDMPK) are disordered. Basic and acidic residues predominate over residues 1294 to 1304 (PLREGSGKDMP). Phosphoserine is present on Ser-1318. The disordered stretch occupies residues 1400–1516 (ERHGSRARGR…CPQQPPQQQL (117 aa)). Residues 1404 to 1419 (SRARGRALERRRRRKV) are compositionally biased toward basic residues. A compositionally biased stretch (basic and acidic residues) spans 1420 to 1437 (DRGGEGDDPAREELEPKR). Residues 1444–1459 (EAEEAHEEEELEEETG) are compositionally biased toward acidic residues. Polar residues-rich tracts occupy residues 1471–1481 (GSPSTQENQNG) and 1489–1500 (SSGSSVPFSTLT).

The protein belongs to the JARID1 histone demethylase family. In terms of assembly, part of two distinct complexes, one containing E2F6, and the other containing REST. Interacts with ZMYND8. Requires Fe(2+) as cofactor.

The protein resides in the nucleus. The enzyme catalyses N(6),N(6),N(6)-trimethyl-L-lysyl(4)-[histone H3] + 3 2-oxoglutarate + 3 O2 = L-lysyl(4)-[histone H3] + 3 formaldehyde + 3 succinate + 3 CO2. Its function is as follows. Histone demethylase that specifically demethylates 'Lys-4' of histone H3, thereby playing a central role in histone code. Does not demethylate histone H3 'Lys-9', H3 'Lys-27', H3 'Lys-36', H3 'Lys-79' or H4 'Lys-20'. Demethylates trimethylated and dimethylated but not monomethylated H3 'Lys-4'. Participates in transcriptional repression of neuronal genes by recruiting histone deacetylases and REST at neuron-restrictive silencer elements. The protein is Lysine-specific demethylase 5C (KDM5C) of Sus scrofa (Pig).